The sequence spans 717 residues: Polyribonucleotide nucleotidyltransferase (717 aa).

Mg(2+) contacts are provided by Asp487 and Asp493. Residues 554 to 613 form the KH domain; the sequence is PRITVINVPKDKIRDVIGTGGKVIREIVEYSGCKIDIEDDGTIKIAATSDEQAQKAIDRI. In terms of domain architecture, S1 motif spans 623-691; the sequence is GQIYTGKVVK…DRGKVKLSMR (69 aa).

The protein belongs to the polyribonucleotide nucleotidyltransferase family. The cofactor is Mg(2+).

It localises to the cytoplasm. It catalyses the reaction RNA(n+1) + phosphate = RNA(n) + a ribonucleoside 5'-diphosphate. Its function is as follows. Involved in mRNA degradation. Catalyzes the phosphorolysis of single-stranded polyribonucleotides processively in the 3'- to 5'-direction. This Acidiphilium cryptum (strain JF-5) protein is Polyribonucleotide nucleotidyltransferase.